The primary structure comprises 100 residues: Urease subunit gamma (100 aa).

Belongs to the urease gamma subunit family. Heterotrimer of UreA (gamma), UreB (beta) and UreC (alpha) subunits. Three heterotrimers associate to form the active enzyme.

Its subcellular location is the cytoplasm. It carries out the reaction urea + 2 H2O + H(+) = hydrogencarbonate + 2 NH4(+). It functions in the pathway nitrogen metabolism; urea degradation; CO(2) and NH(3) from urea (urease route): step 1/1. The sequence is that of Urease subunit gamma from Escherichia coli.